A 528-amino-acid chain; its full sequence is U3 small nucleolar RNA-associated protein 15 homolog (528 aa).

N-acetylalanine is present on Ala-2. 7 WD repeats span residues 36–75 (KEFG…PVKT), 78–117 (RFKD…PLRQ), 120–159 (GHTK…EILT), 162–202 (EHSD…NVLC), 204–242 (EHGQ…QLLV), 246–285 (NHHK…VVHS), and 287–326 (DYAA…KKES). Lys-249 is covalently cross-linked (Glycyl lysine isopeptide (Lys-Gly) (interchain with G-Cter in SUMO2)). Residues 508–528 (AELPEEKTESPRQPSDTDKNS) are disordered. Positions 511-528 (PEEKTESPRQPSDTDKNS) are enriched in basic and acidic residues.

Part of the small subunit (SSU) processome, composed of more than 70 proteins and the RNA chaperone small nucleolar RNA (snoRNA) U3. May be a component of the proposed t-UTP subcomplex of the ribosomal small subunit (SSU) processome containing at least UTP4, WDR43, HEATR1, UTP15, WDR75. Interacts directly with UTP4 and WDR43.

Its subcellular location is the nucleus. The protein localises to the nucleolus. Its function is as follows. Ribosome biogenesis factor. Involved in nucleolar processing of pre-18S ribosomal RNA. Required for optimal pre-ribosomal RNA transcription by RNA polymerase I. Part of the small subunit (SSU) processome, first precursor of the small eukaryotic ribosomal subunit. During the assembly of the SSU processome in the nucleolus, many ribosome biogenesis factors, an RNA chaperone and ribosomal proteins associate with the nascent pre-rRNA and work in concert to generate RNA folding, modifications, rearrangements and cleavage as well as targeted degradation of pre-ribosomal RNA by the RNA exosome. In Rattus norvegicus (Rat), this protein is U3 small nucleolar RNA-associated protein 15 homolog.